We begin with the raw amino-acid sequence, 513 residues long: Ectonucleoside triphosphate diphosphohydrolase 1 (513 aa).

Residues Met-1–Asn-16 are Cytoplasmic-facing. Residues Ile-17–Leu-37 traverse the membrane as a helical segment. Residues Thr-38–Val-481 are Extracellular-facing. N-linked (GlcNAc...) asparagine glycosylation is present at Asn-73. The active-site Proton acceptor is the Glu-174. Residues Asn-227 and Asn-245 are each glycosylated (N-linked (GlcNAc...) asparagine). 2 disulfide bridges follow: Cys-255/Cys-300 and Cys-281/Cys-327. N-linked (GlcNAc...) asparagine glycosylation is found at Asn-307 and Asn-336. An intrachain disulfide couples Cys-340 to Cys-345. Asn-373 carries an N-linked (GlcNAc...) asparagine glycan. Cys-393 and Cys-416 are oxidised to a cystine. Asn-460 is a glycosylation site (N-linked (GlcNAc...) asparagine). Residues Phe-482–Phe-502 form a helical membrane-spanning segment. The Cytoplasmic portion of the chain corresponds to His-503–Val-513.

It belongs to the GDA1/CD39 NTPase family. Homodimer; disulfide-linked. It depends on Ca(2+) as a cofactor. Requires Mg(2+) as cofactor. N-glycosylated. Post-translationally, the N-terminus is blocked. In terms of processing, palmitoylated on Cys-13; which is required for caveola targeting.

It localises to the membrane. Its subcellular location is the caveola. It carries out the reaction a ribonucleoside 5'-triphosphate + 2 H2O = a ribonucleoside 5'-phosphate + 2 phosphate + 2 H(+). It catalyses the reaction a ribonucleoside 5'-triphosphate + H2O = a ribonucleoside 5'-diphosphate + phosphate + H(+). The enzyme catalyses a ribonucleoside 5'-diphosphate + H2O = a ribonucleoside 5'-phosphate + phosphate + H(+). The catalysed reaction is ATP + 2 H2O = AMP + 2 phosphate + 2 H(+). It carries out the reaction ATP + H2O = ADP + phosphate + H(+). It catalyses the reaction ADP + H2O = AMP + phosphate + H(+). The enzyme catalyses CTP + 2 H2O = CMP + 2 phosphate + 2 H(+). The catalysed reaction is CTP + H2O = CDP + phosphate + H(+). It carries out the reaction CDP + H2O = CMP + phosphate + H(+). It catalyses the reaction GTP + 2 H2O = GMP + 2 phosphate + 2 H(+). The enzyme catalyses GTP + H2O = GDP + phosphate + H(+). The catalysed reaction is GDP + H2O = GMP + phosphate + H(+). It carries out the reaction ITP + 2 H2O = IMP + 2 phosphate + 2 H(+). It catalyses the reaction ITP + H2O = IDP + phosphate + H(+). The enzyme catalyses IDP + H2O = IMP + phosphate + H(+). The catalysed reaction is UTP + 2 H2O = UMP + 2 phosphate + 2 H(+). It carries out the reaction UTP + H2O = UDP + phosphate + H(+). It catalyses the reaction UDP + H2O = UMP + phosphate + H(+). Its function is as follows. Catalyzes the hydrolysis of both di- and triphosphate nucleotides (NDPs and NTPs) and hydrolyze NTPs to nucleotide monophosphates (NMPs) in two distinct successive phosphate-releasing steps, with NDPs as intermediates and participates in the regulation of extracellular levels of nucleotides. By hydrolyzing proinflammatory ATP and platelet-activating ADP to AMP, it blocks platelet aggregation and supports blood flow. This Bos taurus (Bovine) protein is Ectonucleoside triphosphate diphosphohydrolase 1.